Reading from the N-terminus, the 118-residue chain is Large ribosomal subunit protein bL20 (118 aa).

The protein belongs to the bacterial ribosomal protein bL20 family.

Binds directly to 23S ribosomal RNA and is necessary for the in vitro assembly process of the 50S ribosomal subunit. It is not involved in the protein synthesizing functions of that subunit. This Cyanothece sp. (strain PCC 7425 / ATCC 29141) protein is Large ribosomal subunit protein bL20.